The following is a 422-amino-acid chain: Putative FBD-associated F-box protein At1g55030 (422 aa).

Positions 8–60 constitute an F-box domain; that stretch reads TDMISQLPEPLILQILGSLPTKVAITTSVLSKQWQSHWKMMPKLEFDSFLRRL. 3 LRR repeats span residues 132–153, 154–175, and 180–201; these read TLET…VYLK, SLKT…INLL, and NLQD…TIAV. In terms of domain architecture, FBD spans 342–391; that stretch reads EWNQPKNVPECLHHLEKFIWEGYKWKREEIEVAKYILKNTNRLKRAIFSL.

This is Putative FBD-associated F-box protein At1g55030 from Arabidopsis thaliana (Mouse-ear cress).